The sequence spans 252 residues: N-acetylglucosaminyl-phosphatidylinositol de-N-acetylase (252 aa).

Residues 2–22 form a helical membrane-spanning segment; that stretch reads EVVGLLCVAVAVLTWGFLRVW. Residues 23-252 are Cytoplasmic-facing; the sequence is NSAERMRSPE…YMSVNSLQLL (230 aa).

This sequence belongs to the PIGL family.

Its subcellular location is the endoplasmic reticulum membrane. It carries out the reaction a 6-(N-acetyl-alpha-D-glucosaminyl)-1-(1,2-diacyl-sn-glycero-3-phospho)-1D-myo-inositol + H2O = a 6-(alpha-D-glucosaminyl)-1-(1,2-diacyl-sn-glycero-3-phospho)-1D-myo-inositol + acetate. It functions in the pathway glycolipid biosynthesis; glycosylphosphatidylinositol-anchor biosynthesis. Catalyzes the second step of glycosylphosphatidylinositol (GPI) biosynthesis, which is the de-N-acetylation of N-acetylglucosaminyl-phosphatidylinositol. The protein is N-acetylglucosaminyl-phosphatidylinositol de-N-acetylase (Pigl) of Rattus norvegicus (Rat).